Reading from the N-terminus, the 195-residue chain is Thymidine kinase (195 aa).

ATP-binding positions include 15–22 and 88–91; these read GSMFSGKS and DEVQ. The active-site Proton acceptor is the glutamate 89. A substrate-binding site is contributed by phenylalanine 120. Residues cysteine 145 and cysteine 148 each contribute to the Zn(2+) site. Substrate contacts are provided by residues 170–174 and tyrosine 179; that span reads IILVG. Positions 183 and 186 each coordinate Zn(2+).

The protein belongs to the thymidine kinase family. Homotetramer.

It localises to the cytoplasm. It catalyses the reaction thymidine + ATP = dTMP + ADP + H(+). This chain is Thymidine kinase, found in Bacillus cereus (strain ATCC 14579 / DSM 31 / CCUG 7414 / JCM 2152 / NBRC 15305 / NCIMB 9373 / NCTC 2599 / NRRL B-3711).